Consider the following 151-residue polypeptide: Nucleoside diphosphate kinase (151 aa).

Residues lysine 11, phenylalanine 59, arginine 87, threonine 93, arginine 104, and asparagine 114 each coordinate ATP. Histidine 117 serves as the catalytic Pros-phosphohistidine intermediate.

It belongs to the NDK family. In terms of assembly, homotetramer. It depends on Mg(2+) as a cofactor.

It is found in the cytoplasm. It catalyses the reaction a 2'-deoxyribonucleoside 5'-diphosphate + ATP = a 2'-deoxyribonucleoside 5'-triphosphate + ADP. The enzyme catalyses a ribonucleoside 5'-diphosphate + ATP = a ribonucleoside 5'-triphosphate + ADP. Major role in the synthesis of nucleoside triphosphates other than ATP. The ATP gamma phosphate is transferred to the NDP beta phosphate via a ping-pong mechanism, using a phosphorylated active-site intermediate. The chain is Nucleoside diphosphate kinase from Prochlorococcus marinus (strain NATL2A).